The sequence spans 197 residues: dTTP/UTP pyrophosphatase (197 aa).

The Proton acceptor role is filled by Asp-70.

Belongs to the Maf family. YhdE subfamily. In terms of assembly, homodimer. Can also form homotetramers. A divalent metal cation serves as cofactor.

Its subcellular location is the cytoplasm. It carries out the reaction dTTP + H2O = dTMP + diphosphate + H(+). The catalysed reaction is UTP + H2O = UMP + diphosphate + H(+). It catalyses the reaction 5-methyl-UTP + H2O = 5-methyl-UMP + diphosphate + H(+). The enzyme catalyses psi-UTP + H2O = psi-UMP + diphosphate + H(+). It carries out the reaction 5-methyl-CTP + H2O = 5-methyl-CMP + diphosphate + H(+). Functionally, nucleoside triphosphate pyrophosphatase that hydrolyzes dTTP and UTP. Can also hydrolyze TTP and the modified nucleotides 5-methyl-UTP (m(5)UTP), pseudo-UTP and 5-methyl-CTP (m(5)CTP). Has weak activity with CTP. May have a dual role in cell division arrest and in preventing the incorporation of modified nucleotides into cellular nucleic acids. Important in maintenance of cell shape. The polypeptide is dTTP/UTP pyrophosphatase (yhdE) (Escherichia coli (strain K12)).